Here is a 689-residue protein sequence, read N- to C-terminus: MSEKTFLVEIGTEELPPKALRSLAESFAANFTAELDAAGLAHGVVSWFAAPRRLALKVANLAASQPDREVEKRGPAVSAAFDAEGNPSKAAEGWARGCGITVDQAERLVTDKGEWLMYRAHVKGESAQALLPNMVSTALSKLPIPKLMRWGASDVQFVRPVHTVTLLLDDEVLPATILGIQSDRVIRGHRFMGEPEFTIDHADQYPQILLERGKVIADYNARKAKIQQDAEAAAAKIGGNADLSDSLLEEVTSLVEWPVVLTAKFEEKFLAVPAEALVYTMKGDQKYFPVYGTDGKLLPNFIFVANIESKDPRQIISGNEKVVRPRLADAEFFFNTDRKKRLEDHLPRLETVLFQQQLGTLRDKTDRIQALSGWIASQIGADVNHATRAGLLSKCDLMTNMVFEFTDTQGVMGMHYARHDGESEDVAVALNEQYMPRFAGDALPSSLVACAVAIADKMDTLAGIFGIGQHPKGDKDPFALRRAALGVLRIIVEKNLPLDLQTLTEEAVRLYGSKLTNAKVVDDVVDFMLGRFRAWYQDEGYSVDTIQAVLANRPTRPADFDARMKAVSHFRTLDEAVALAAANKRVSNILAKATEPLNDEVHASVLKEDPEIRLALQVAVMRDKLQPLFAEGRYQEALVELAQLREPVDEFFEKVMVNADDAQVRINRLTLLSKLRALFLQVADISLLQ.

This sequence belongs to the class-II aminoacyl-tRNA synthetase family. In terms of assembly, tetramer of two alpha and two beta subunits.

It is found in the cytoplasm. The catalysed reaction is tRNA(Gly) + glycine + ATP = glycyl-tRNA(Gly) + AMP + diphosphate. The chain is Glycine--tRNA ligase beta subunit from Cronobacter sakazakii (strain ATCC BAA-894) (Enterobacter sakazakii).